The following is a 305-amino-acid chain: Cytochrome c biogenesis protein CcsA (305 aa).

A run of 8 helical transmembrane segments spans residues 11–31 (GLGF…FWAV), 37–57 (TGIV…QLVL), 63–83 (GHFP…ACTL), 96–116 (IVAA…SFAL), 141–161 (VIMV…AVLL), 212–232 (TITV…VWAN), 246–263 (TWAL…HTRL), and 275–295 (VAVV…LLGI).

The protein belongs to the CcmF/CycK/Ccl1/NrfE/CcsA family. As to quaternary structure, may interact with ccs1.

The protein localises to the cellular thylakoid membrane. Required during biogenesis of c-type cytochromes (cytochrome c6 and cytochrome f) at the step of heme attachment. This is Cytochrome c biogenesis protein CcsA from Parasynechococcus marenigrum (strain WH8102).